An 85-amino-acid chain; its full sequence is UPF0386 protein Atu1321 (85 aa).

This sequence belongs to the UPF0386 family.

The polypeptide is UPF0386 protein Atu1321 (Agrobacterium fabrum (strain C58 / ATCC 33970) (Agrobacterium tumefaciens (strain C58))).